The chain runs to 428 residues: Putative zinc metalloprotease SA1105 (428 aa).

H21 serves as a coordination point for Zn(2+). E22 is a catalytic residue. Residue H25 coordinates Zn(2+). 4 consecutive transmembrane segments (helical) span residues 172–194 (FLTLFAGPLFNFILALVLFIGLA), 309–331 (GSTLIFTAVVGMLASIFTGGFSF), 352–374 (IISLIGYTALLSVNLGIMNLIPI), and 401–420 (TTIIAIGAIFMVVIMILVTW). In terms of domain architecture, PDZ spans 186–269 (ALVLFIGLAY…TKSVELTPKK (84 aa)).

The protein belongs to the peptidase M50B family. The cofactor is Zn(2+).

The protein resides in the cell membrane. The polypeptide is Putative zinc metalloprotease SA1105 (Staphylococcus aureus (strain N315)).